The chain runs to 133 residues: Large ribosomal subunit protein bL19 (133 aa).

This sequence belongs to the bacterial ribosomal protein bL19 family.

Its function is as follows. This protein is located at the 30S-50S ribosomal subunit interface and may play a role in the structure and function of the aminoacyl-tRNA binding site. The sequence is that of Large ribosomal subunit protein bL19 from Sulfurihydrogenibium sp. (strain YO3AOP1).